The sequence spans 86 residues: Small ribosomal subunit protein bS20 (86 aa).

Belongs to the bacterial ribosomal protein bS20 family.

Functionally, binds directly to 16S ribosomal RNA. The chain is Small ribosomal subunit protein bS20 from Buchnera aphidicola subsp. Cinara cedri (strain Cc).